The chain runs to 105 residues: Large ribosomal subunit protein bL21 (105 aa).

The protein belongs to the bacterial ribosomal protein bL21 family. In terms of assembly, part of the 50S ribosomal subunit. Contacts protein L20.

In terms of biological role, this protein binds to 23S rRNA in the presence of protein L20. The polypeptide is Large ribosomal subunit protein bL21 (Desulfatibacillum aliphaticivorans).